A 323-amino-acid polypeptide reads, in one-letter code: tRNA U34 carboxymethyltransferase (323 aa).

Carboxy-S-adenosyl-L-methionine-binding positions include lysine 91, tryptophan 105, lysine 110, glycine 130, 181-182 (IE), methionine 196, tyrosine 200, and arginine 315.

It belongs to the class I-like SAM-binding methyltransferase superfamily. CmoB family. As to quaternary structure, homotetramer.

It carries out the reaction carboxy-S-adenosyl-L-methionine + 5-hydroxyuridine(34) in tRNA = 5-carboxymethoxyuridine(34) in tRNA + S-adenosyl-L-homocysteine + H(+). Functionally, catalyzes carboxymethyl transfer from carboxy-S-adenosyl-L-methionine (Cx-SAM) to 5-hydroxyuridine (ho5U) to form 5-carboxymethoxyuridine (cmo5U) at position 34 in tRNAs. The chain is tRNA U34 carboxymethyltransferase from Yersinia pseudotuberculosis serotype IB (strain PB1/+).